We begin with the raw amino-acid sequence, 206 residues long: dTTP/UTP pyrophosphatase (206 aa).

Asp-79 (proton acceptor) is an active-site residue.

It belongs to the Maf family. YhdE subfamily. A divalent metal cation serves as cofactor.

Its subcellular location is the cytoplasm. It catalyses the reaction dTTP + H2O = dTMP + diphosphate + H(+). It carries out the reaction UTP + H2O = UMP + diphosphate + H(+). Nucleoside triphosphate pyrophosphatase that hydrolyzes dTTP and UTP. May have a dual role in cell division arrest and in preventing the incorporation of modified nucleotides into cellular nucleic acids. This Rhizobium etli (strain ATCC 51251 / DSM 11541 / JCM 21823 / NBRC 15573 / CFN 42) protein is dTTP/UTP pyrophosphatase.